The sequence spans 28 residues: Ranatuerin-2B (28 aa).

A disulfide bridge links cysteine 23 with cysteine 28.

Expressed by the skin glands.

The protein localises to the secreted. In terms of biological role, antibacterial activity against Gram-positive bacterium S.aureus and Gram-negative bacterium E.coli. Has activity against C.albicans. The polypeptide is Ranatuerin-2B (Lithobates berlandieri (Rio Grande leopard frog)).